Reading from the N-terminus, the 198-residue chain is tRNA(Phe) 7-((3-amino-3-carboxypropyl)-4-demethylwyosine(37)-N(4))-methyltransferase 1 (198 aa).

This sequence belongs to the TYW3 family.

The catalysed reaction is 4-demethyl-7-[(3S)-3-amino-3-carboxypropyl]wyosine(37) in tRNA(Phe) + S-adenosyl-L-methionine = 7-[(3S)-3-amino-3-carboxypropyl]wyosine(37) in tRNA(Phe) + S-adenosyl-L-homocysteine + H(+). In terms of biological role, S-adenosyl-L-methionine-dependent methyltransferase that acts as a component of the wyosine derivatives biosynthesis pathway. Probably methylates N-4 position of wybutosine-86 to produce wybutosine-72. This chain is tRNA(Phe) 7-((3-amino-3-carboxypropyl)-4-demethylwyosine(37)-N(4))-methyltransferase 1, found in Thermococcus kodakarensis (strain ATCC BAA-918 / JCM 12380 / KOD1) (Pyrococcus kodakaraensis (strain KOD1)).